Reading from the N-terminus, the 500-residue chain is NAD(P)H-quinone oxidoreductase chain 4, chloroplastic (500 aa).

14 helical membrane passes run 4–24 (FPWLTIIVGFPISAGSLMLFL), 35–55 (YTICICILELLITTYAFCYNF), 87–107 (IGTILLTGFITTLAALAAFPV), 113–130 (FFHFLMLAMYSGQIGSFS), 134–154 (LLLFFIMWELELIPVYLLLSM), 167–187 (FILYTAGSSIFLLIGVLGISL), 211–231 (ILFYIGFLIAFAVKSPIIPLH), 242–262 (HYSTCMLLAGILLKMGAYGLV), 272–292 (AHSMFSPWLMVVGTIQIIYAA), 305–325 (IAYSSVSHMGFIIIGIGSITD), 330–350 (GAILQIISHGFIGAALFFLAG), 386–406 (LALPGMSGFVAELIVFFGIIT), 416–436 (ILIIFVMAIGMILTPIYLLSM), and 462–482 (LFLSISILLPIIGIGIYPDFV).

The protein belongs to the complex I subunit 4 family.

The protein resides in the plastid. Its subcellular location is the chloroplast thylakoid membrane. It catalyses the reaction a plastoquinone + NADH + (n+1) H(+)(in) = a plastoquinol + NAD(+) + n H(+)(out). The catalysed reaction is a plastoquinone + NADPH + (n+1) H(+)(in) = a plastoquinol + NADP(+) + n H(+)(out). The polypeptide is NAD(P)H-quinone oxidoreductase chain 4, chloroplastic (Arabis hirsuta (Hairy rock-cress)).